Reading from the N-terminus, the 303-residue chain is Protease HtpX homolog (303 aa).

The next 2 membrane-spanning stretches (helical) occupy residues 19-39 (IIIF…VSYF) and 41-61 (LGEF…YYAY). Histidine 146 contributes to the Zn(2+) binding site. Glutamate 147 is a catalytic residue. Histidine 150 is a Zn(2+) binding site. The next 2 helical transmembrane spans lie at 156 to 176 (VRLQ…GDSL) and 192 to 212 (NILG…ATLL). Glutamate 221 is a binding site for Zn(2+).

Belongs to the peptidase M48B family. The cofactor is Zn(2+).

The protein localises to the cell inner membrane. The protein is Protease HtpX homolog of Dictyoglomus thermophilum (strain ATCC 35947 / DSM 3960 / H-6-12).